Here is a 264-residue protein sequence, read N- to C-terminus: 3-methyl-2-oxobutanoate hydroxymethyltransferase (264 aa).

Residues D45 and D84 each contribute to the Mg(2+) site. 3-methyl-2-oxobutanoate contacts are provided by residues 45 to 46, D84, and K112; that span reads DS. Residue E114 coordinates Mg(2+). The Proton acceptor role is filled by E181.

Belongs to the PanB family. As to quaternary structure, homodecamer; pentamer of dimers. Mg(2+) serves as cofactor.

It localises to the cytoplasm. It carries out the reaction 3-methyl-2-oxobutanoate + (6R)-5,10-methylene-5,6,7,8-tetrahydrofolate + H2O = 2-dehydropantoate + (6S)-5,6,7,8-tetrahydrofolate. It functions in the pathway cofactor biosynthesis; (R)-pantothenate biosynthesis; (R)-pantoate from 3-methyl-2-oxobutanoate: step 1/2. In terms of biological role, catalyzes the reversible reaction in which hydroxymethyl group from 5,10-methylenetetrahydrofolate is transferred onto alpha-ketoisovalerate to form ketopantoate. This Psychromonas ingrahamii (strain DSM 17664 / CCUG 51855 / 37) protein is 3-methyl-2-oxobutanoate hydroxymethyltransferase.